The following is a 246-amino-acid chain: MLKSEVSKQITTPLTAPAFPRGPYRFHNREYFNIIYRTDADALRKIVPEPLELGEDPLVRFEMMAMPDTSGLGSYTECGQAIPVSYNGKKGDYLHMMYLDNQPAIAVGRELSAYPKKLGYPKLFVDSDTLVGTLDYGKLRVAIATMGYKHKQLDLNEAKEQICRPNFMLKIIPNYDGTPRICELISAQIKDITVHEAWTGPARLQLFDHAMAPFNDLPVKEIVSSSHILTDLTLPSPEVIYDYLKK.

Lys116 functions as the Schiff-base intermediate with acetoacetate in the catalytic mechanism.

The protein belongs to the ADC family.

It catalyses the reaction acetoacetate + H(+) = acetone + CO2. Its function is as follows. Catalyzes the conversion of acetoacetate to acetone and carbon dioxide. The sequence is that of Acetoacetate decarboxylase from Clostridium botulinum (strain Eklund 17B / Type B).